The following is a 310-amino-acid chain: Lipoyl synthase (310 aa).

The [4Fe-4S] cluster site is built by Cys-41, Cys-46, Cys-52, Cys-68, Cys-72, Cys-75, and Ser-281. In terms of domain architecture, Radical SAM core spans 54–270; sequence GERRTATFMI…RKVAMEKGFK (217 aa). A disordered region spans residues 285-310; the sequence is DEQVNEAAKERQRIGDEKLEAAKNEA.

The protein belongs to the radical SAM superfamily. Lipoyl synthase family. [4Fe-4S] cluster is required as a cofactor.

It localises to the cytoplasm. The catalysed reaction is [[Fe-S] cluster scaffold protein carrying a second [4Fe-4S](2+) cluster] + N(6)-octanoyl-L-lysyl-[protein] + 2 oxidized [2Fe-2S]-[ferredoxin] + 2 S-adenosyl-L-methionine + 4 H(+) = [[Fe-S] cluster scaffold protein] + N(6)-[(R)-dihydrolipoyl]-L-lysyl-[protein] + 4 Fe(3+) + 2 hydrogen sulfide + 2 5'-deoxyadenosine + 2 L-methionine + 2 reduced [2Fe-2S]-[ferredoxin]. It participates in protein modification; protein lipoylation via endogenous pathway; protein N(6)-(lipoyl)lysine from octanoyl-[acyl-carrier-protein]. Its function is as follows. Catalyzes the radical-mediated insertion of two sulfur atoms into the C-6 and C-8 positions of the octanoyl moiety bound to the lipoyl domains of lipoate-dependent enzymes, thereby converting the octanoylated domains into lipoylated derivatives. The sequence is that of Lipoyl synthase from Staphylococcus carnosus (strain TM300).